A 369-amino-acid chain; its full sequence is Chaperone protein DnaJ (369 aa).

One can recognise a J domain in the interval 4–69 (SYYEILEVEK…KKRALYDRYG (66 aa)). The CR-type zinc finger occupies 130 to 207 (GCKKTIKVQY…CKGKTYILKD (78 aa)). C143, C146, C159, C162, C181, C184, C195, and C198 together coordinate Zn(2+). CXXCXGXG motif repeat units lie at residues 143 to 150 (CESCDGTG), 159 to 166 (CKQCNGQG), 181 to 188 (CGACQGKG), and 195 to 202 (CQACKGKT).

Belongs to the DnaJ family. As to quaternary structure, homodimer. Requires Zn(2+) as cofactor.

It localises to the cytoplasm. Participates actively in the response to hyperosmotic and heat shock by preventing the aggregation of stress-denatured proteins and by disaggregating proteins, also in an autonomous, DnaK-independent fashion. Unfolded proteins bind initially to DnaJ; upon interaction with the DnaJ-bound protein, DnaK hydrolyzes its bound ATP, resulting in the formation of a stable complex. GrpE releases ADP from DnaK; ATP binding to DnaK triggers the release of the substrate protein, thus completing the reaction cycle. Several rounds of ATP-dependent interactions between DnaJ, DnaK and GrpE are required for fully efficient folding. Also involved, together with DnaK and GrpE, in the DNA replication of plasmids through activation of initiation proteins. This is Chaperone protein DnaJ from Helicobacter pylori (strain ATCC 700392 / 26695) (Campylobacter pylori).